The sequence spans 207 residues: Outer-membrane lipoprotein LolB (207 aa).

A signal peptide spans 1–21 (MPLPDFRLIRLLPLASLVLTA). The N-palmitoyl cysteine moiety is linked to residue Cys-22. Cys-22 carries the S-diacylglycerol cysteine lipid modification.

It belongs to the LolB family. In terms of assembly, monomer.

The protein resides in the cell outer membrane. Plays a critical role in the incorporation of lipoproteins in the outer membrane after they are released by the LolA protein. This chain is Outer-membrane lipoprotein LolB, found in Escherichia fergusonii (strain ATCC 35469 / DSM 13698 / CCUG 18766 / IAM 14443 / JCM 21226 / LMG 7866 / NBRC 102419 / NCTC 12128 / CDC 0568-73).